A 404-amino-acid polypeptide reads, in one-letter code: Cysteine desulfurase IscS (404 aa).

Pyridoxal 5'-phosphate is bound by residues 75-76 (AT), asparagine 155, glutamine 183, and 203-205 (SGH). Position 206 is an N6-(pyridoxal phosphate)lysine (lysine 206). Threonine 243 is a pyridoxal 5'-phosphate binding site. Cysteine 328 acts as the Cysteine persulfide intermediate in catalysis. A [2Fe-2S] cluster-binding site is contributed by cysteine 328.

The protein belongs to the class-V pyridoxal-phosphate-dependent aminotransferase family. NifS/IscS subfamily. As to quaternary structure, homodimer. Forms a heterotetramer with IscU, interacts with other sulfur acceptors. Requires pyridoxal 5'-phosphate as cofactor.

It localises to the cytoplasm. It catalyses the reaction (sulfur carrier)-H + L-cysteine = (sulfur carrier)-SH + L-alanine. It functions in the pathway cofactor biosynthesis; iron-sulfur cluster biosynthesis. Its function is as follows. Master enzyme that delivers sulfur to a number of partners involved in Fe-S cluster assembly, tRNA modification or cofactor biosynthesis. Catalyzes the removal of elemental sulfur atoms from cysteine to produce alanine. Functions as a sulfur delivery protein for Fe-S cluster synthesis onto IscU, an Fe-S scaffold assembly protein, as well as other S acceptor proteins. The polypeptide is Cysteine desulfurase IscS (Shewanella putrefaciens (strain CN-32 / ATCC BAA-453)).